The chain runs to 199 residues: Ion-translocating oxidoreductase complex subunit A (199 aa).

6 helical membrane passes run 8 to 28 (LFTI…QFLG), 49 to 69 (VVFV…FILV), 75 to 95 (FLRT…VEFI), 106 to 126 (SLGI…AVLL), 138 to 158 (VVFG…MAAI), and 178 to 198 (AFFI…VIPL).

Belongs to the NqrDE/RnfAE family. The Rnf complex is probably composed of eight subunits, including RnfA, RnfB, RnfC, RnfD, RnfE and RnfG.

The protein localises to the cell membrane. Its function is as follows. Part of a membrane-bound complex that couples electron transfer with translocation of ions across the membrane. Catalyzes Na(+) transport, most probably coupled to electron transfer from reduced ferredoxin to methanophenazine and heterodisulfide reductase. Involved in heterodisulfide reduction during methanogenesis from acetate. The polypeptide is Ion-translocating oxidoreductase complex subunit A (Methanosarcina acetivorans (strain ATCC 35395 / DSM 2834 / JCM 12185 / C2A)).